The sequence spans 279 residues: Shikimate dehydrogenase (NADP(+)) (279 aa).

Shikimate contacts are provided by residues 21-23 (SKS) and Thr68. The active-site Proton acceptor is Lys72. Glu84 is a binding site for NADP(+). Shikimate-binding residues include Asn93 and Asp109. NADP(+)-binding positions include 133-137 (GAGGA), 157-162 (NRTQAK), and Met220. Tyr222 serves as a coordination point for shikimate. Gly244 serves as a coordination point for NADP(+).

The protein belongs to the shikimate dehydrogenase family. In terms of assembly, homodimer.

It catalyses the reaction shikimate + NADP(+) = 3-dehydroshikimate + NADPH + H(+). It functions in the pathway metabolic intermediate biosynthesis; chorismate biosynthesis; chorismate from D-erythrose 4-phosphate and phosphoenolpyruvate: step 4/7. Its function is as follows. Involved in the biosynthesis of the chorismate, which leads to the biosynthesis of aromatic amino acids. Catalyzes the reversible NADPH linked reduction of 3-dehydroshikimate (DHSA) to yield shikimate (SA). This chain is Shikimate dehydrogenase (NADP(+)), found in Shewanella halifaxensis (strain HAW-EB4).